A 272-amino-acid polypeptide reads, in one-letter code: Regulatory factor X-associated protein (272 aa).

Disordered regions lie at residues 1–20 (MEAQ…GVPH), 74–142 (LCEG…KTCT), and 175–195 (KKKK…GSAG). Positions 79–94 (GDGEEEAGEDEADLLD) are enriched in acidic residues. Residues 163–178 (KKHRNKMYKDKYKKKK) carry the Nuclear localization signal motif. Residue Lys198 forms a Glycyl lysine isopeptide (Lys-Gly) (interchain with G-Cter in SUMO2) linkage. The interval 214-270 (TGSFGDRPARPTLLEQVLNQKRLSLLRSPEVVQFLQKQQQLLNQQVLEQRQQQFPGT) is C-terminal domain.

As to quaternary structure, the RFX heterotetrameric complex consists of 2 molecules of RFX5 and one each of RFXAP and RFX-B/RFXANK; with each subunit representing a separate complementation group. RFX forms cooperative DNA binding complexes with X2BP and CBF/NF-Y. RFX associates with CIITA to form an active transcriptional complex. Phosphorylated. In terms of tissue distribution, ubiquitous.

It is found in the nucleus. In terms of biological role, part of the RFX complex that binds to the X-box of MHC II promoters. This Homo sapiens (Human) protein is Regulatory factor X-associated protein (RFXAP).